Consider the following 114-residue polypeptide: uncharacterized protein (114 aa).

Basic residues predominate over residues 18–29 (TRKRNSHKKVTK). Disordered stretches follow at residues 18–47 (TRKRNSHKKVTKRAVEKRKQDSTRQKRRTG) and 65–108 (SRPR…KLLN). A compositionally biased stretch (basic and acidic residues) spans 30–41 (RAVEKRKQDSTR).

This is an uncharacterized protein from Homo sapiens (Human).